An 881-amino-acid chain; its full sequence is Low-affinity phosphate transporter PHO90 (881 aa).

The region spanning M1–E288 is the SPX domain. Transmembrane regions (helical) follow at residues I417 to A437, A456 to L476, I493 to E513, V514 to C534, V539 to A559, A581 to I601, F663 to V683, F691 to L711, A718 to S738, G758 to S778, I805 to F825, and A854 to V874.

It belongs to the CitM (TC 2.A.11) transporter family.

The protein localises to the membrane. Its function is as follows. Low-affinity phosphate transporter involved in the control of cellular phosphate levels. The protein is Low-affinity phosphate transporter PHO90 (PHO90) of Saccharomyces cerevisiae (strain ATCC 204508 / S288c) (Baker's yeast).